A 2237-amino-acid polypeptide reads, in one-letter code: Zinc finger protein 318 (2237 aa).

Composition is skewed to low complexity over residues 1-12 (MYRSGSRSSVSS) and 30-39 (GASSGPTRRP). Residues 1–221 (MYRSGSRSSV…DMDRDDLTDD (221 aa)) are disordered. The tract at residues 1-1114 (MYRSGSRSSV…THMHNKKHTQ (1114 aa)) is interaction with AR. The residue at position 40 (Ser40) is a Phosphoserine. Residues 53-66 (PARRHRSPSGHRGR) show a composition bias toward basic residues. Phosphoserine occurs at positions 69, 109, and 111. The span at 140 to 156 (IRGESRADFARDGRGDH) shows a compositional bias: basic and acidic residues. Residues Ser167 and Ser205 each carry the phosphoserine modification. Tyr237 bears the Phosphotyrosine mark. Ser239 and Ser246 each carry phosphoserine. Residues 263 to 350 (LHRPEFSPQS…SPRFLDPEFR (88 aa)) are disordered. Basic and acidic residues-rich tracts occupy residues 274 to 290 (CHDELLRGTERNRDKLK) and 297 to 317 (RSEERSREAKRPRYDDTEKVH). Residues 321–332 (GDHSSFTSGTRN) are compositionally biased toward polar residues. The stretch at 348-376 (EFRELDLARRKREEEEEQSRSLSQELVGV) forms a coiled coil. Residues Ser497, Ser502, Ser531, and Ser557 each carry the phosphoserine modification. Disordered regions lie at residues 551–612 (QEKR…ESLE) and 645–732 (QERL…TKNS). Over residues 560–576 (DIEDEEKFLYGDEEEDI) the composition is skewed to acidic residues. Residues Lys577, Lys583, Lys596, and Lys607 each participate in a glycyl lysine isopeptide (Lys-Gly) (interchain with G-Cter in SUMO2) cross-link. Residues 577 to 586 (KSESPLKSLE) are compositionally biased toward basic and acidic residues. The segment covering 592-602 (GTRQKANSLPS) has biased composition (polar residues). Basic and acidic residues-rich tracts occupy residues 658-677 (SADRRLSADRHLSGDRHFSA) and 692-706 (RSSDPHRPESRETHH). Thr865 bears the Phosphothreonine mark. A coiled-coil region spans residues 904–1003 (EKNRASQKQK…SELDKVAQIL (100 aa)). Basic and acidic residues-rich tracts occupy residues 945–964 (QQGEMLRKKRREKDGHKDPL), 1013–1037 (KSSNDSKESTEKPEKEKSKSPEKEL), and 1047–1056 (KESKMNEKSC). 2 disordered regions span residues 945–966 (QQGEMLRKKRREKDGHKDPLLM) and 1013–1072 (KSSN…TVKQ). At Ser1032 the chain carries Phosphoserine. Polar residues predominate over residues 1058–1072 (KSPSSTESLQPTVKQ). Residue Ser1059 is modified to Phosphoserine. 2 consecutive Matrin-type zinc fingers follow at residues 1085 to 1119 (AGSHWCKDCNTTCGTMFDFFTHMHNKKHTQTLDPY) and 1158 to 1180 (FYCQLCEEFLGDPISGEQHVKGH). Disordered stretches follow at residues 1245 to 1289 (VKED…KKEP), 1302 to 1342 (SWKK…VGKA), and 1366 to 1395 (TTSTQTKIRPNLPIPSTVLRKSGSATVSKP). 3 stretches are compositionally biased toward basic and acidic residues: residues 1280–1289 (QVKEEVKKEP), 1304–1313 (KKPEKEEEKG), and 1321–1341 (PKEDTVETSKDRDDGKAEVGK). A Phosphoserine modification is found at Ser1445. 4 disordered regions span residues 1449 to 1497 (KVEL…LSAP), 1614 to 1651 (HETKLSSSTLANGESSSLPRTESSDFSSTCTLNSSMSS), 1727 to 1770 (TSGS…HCQT), and 1790 to 1867 (EVYQ…MTGH). Positions 1469-1490 (LPPPPPPPPPPPPPPPPPPPQA) are enriched in pro residues. Residues 1618–1639 (LSSSTLANGESSSLPRTESSDF) show a composition bias toward polar residues. Residues 1640-1651 (SSTCTLNSSMSS) show a composition bias toward low complexity. Positions 1734–1749 (DTHKDRPPEGKIRFDL) are enriched in basic and acidic residues. Positions 1757 to 1770 (TDSTSHLSDTHCQT) are enriched in polar residues. Positions 1796–1814 (GCRESEMKRKTELKGKVAT) are enriched in basic and acidic residues. A coiled-coil region spans residues 1798–1827 (RESEMKRKTELKGKVATEEEEEEEEEGANS). The span at 1815–1824 (EEEEEEEEEG) shows a compositional bias: acidic residues. The span at 1828–1840 (IEDSNSNHGNRNT) shows a compositional bias: polar residues. 9 positions are modified to phosphoserine: Ser1878, Ser1908, Ser1988, Ser2044, Ser2054, Ser2140, Ser2143, Ser2194, and Ser2206. A disordered region spans residues 2039–2064 (EGAHSSSNSRNGRITSNSLETGHPVE). Over residues 2041 to 2058 (AHSSSNSRNGRITSNSLE) the composition is skewed to polar residues. The interval 2178-2237 (EDNDSALNLVKTPPSGSPSRDQVVGGNVSPREMPEQEAAVDVIPDHTRSNVYNSQDYLNG) is disordered. The span at 2226–2237 (SNVYNSQDYLNG) shows a compositional bias: polar residues.

Homodimer. Heterodimer of isoform 1 and isoform 2. Isoform 1 and isoform 2 interact with AR. As to expression, isoform 1 and isoform 2 are highly expressed in testis, moderately expressed in adrenal gland and uterus and faintly expressed in brain, kidney and liver. Isoform 1 is expressed more in adrenal gland, uterus and liver than isoform 2 is. Expression during testicular development of isoform 1 and isoform 2 is restricted to spermatocytes at the pachytene stage of meiotic prophase and to round and elongated spermatids.

The protein localises to the nucleus. Its function is as follows. Acts as a transcriptional corepressor for AR-mediated transactivation function. May act as a transcriptional regulator during spermatogenesis and in particular, during meiotic division. Functionally, acts as a transcriptional coactivator for AR-mediated transactivation function. May act as a transcriptional regulator during spermatogenesis and in particular, during meiotic division. The chain is Zinc finger protein 318 (Znf318) from Mus musculus (Mouse).